Here is a 536-residue protein sequence, read N- to C-terminus: Inactive phospholipase D5 (536 aa).

Over 1-68 (MEIRQHEWLS…DKLEHSQQKC (68 aa)) the chain is Cytoplasmic. A helical membrane pass occupies residues 69-89 (IVIFALVCCFAVLVALIFSAV). Over 90-536 (DIMGEDEDGL…NATGREPLSV (447 aa)) the chain is Extracellular. Asn-121 is a glycosylation site (N-linked (GlcNAc...) asparagine). The 28-residue stretch at 215–242 (NKGRLQSSFWIVDKQHVYIGSAGLDWRS) folds into the PLD phosphodiesterase 1 domain. An N-linked (GlcNAc...) asparagine glycan is attached at Asn-302. Positions 434–460 (FPKLNRNKYMVTDGAAYIGNFDWVGND) constitute a PLD phosphodiesterase 2 domain. A disordered region spans residues 503–536 (QPTKQPNCSSLSKLKSPSKQPAMANATGREPLSV). Residues 511-521 (SSLSKLKSPSK) show a composition bias toward low complexity.

It belongs to the phospholipase D family.

It localises to the membrane. In Mus musculus (Mouse), this protein is Inactive phospholipase D5 (Pld5).